The primary structure comprises 409 residues: Exonuclease V (409 aa).

Position 86 (Cys86) interacts with [4Fe-4S] cluster. Positions 176 and 207 each coordinate Mg(2+). [4Fe-4S] cluster-binding residues include Cys386, Cys389, and Cys395.

The protein belongs to the EXO5 family. In terms of assembly, monomer. It depends on Mg(2+) as a cofactor. [4Fe-4S] cluster is required as a cofactor.

The protein localises to the cytoplasm. It localises to the nucleus. Its subcellular location is the mitochondrion. Single-stranded DNA (ssDNA) bidirectional exonuclease involved in DNA repair. Probably involved in DNA repair following ultraviolet (UV) irradiation and interstrand cross-links (ICLs) damage. Has both 5'-3' and 3'-5' exonuclease activities with a strong preference for 5'-ends. Acts as a sliding exonuclease that loads at ssDNA ends and then slides along the ssDNA prior to cutting; however the sliding and the 3'-5' exonuclease activities are abolished upon binding to the replication protein A (RPA) complex that enforces 5'-directionality activity. In terms of biological role, plays a redundant role with the flap endonuclease FEN1/rad2 for the maintenance of mitochondrial DNA. The sequence is that of Exonuclease V (exo5) from Schizosaccharomyces pombe (strain 972 / ATCC 24843) (Fission yeast).